The sequence spans 338 residues: Probable tRNA pseudouridine synthase B (338 aa).

Catalysis depends on aspartate 78, which acts as the Nucleophile. The region spanning 245 to 320 (LPKIILRDSA…IAASPIRVLM (76 aa)) is the PUA domain.

This sequence belongs to the pseudouridine synthase TruB family. Type 2 subfamily.

It carries out the reaction uridine(55) in tRNA = pseudouridine(55) in tRNA. Functionally, could be responsible for synthesis of pseudouridine from uracil-55 in the psi GC loop of transfer RNAs. This is Probable tRNA pseudouridine synthase B from Methanosarcina acetivorans (strain ATCC 35395 / DSM 2834 / JCM 12185 / C2A).